Here is an 855-residue protein sequence, read N- to C-terminus: Envelope glycoprotein gp160 (855 aa).

A signal peptide spans 1–31 (MRAREIERNCPNLWKWGIMLLGILMICSAAD). At 32 to 683 (NLWVTVYYGV…ITQWLWYIKI (652 aa)) the chain is on the extracellular side. Cysteine 53 and cysteine 73 are joined by a disulfide. N-linked (GlcNAc...) asparagine; by host glycans are attached at residues asparagine 87, asparagine 129, asparagine 140, asparagine 145, asparagine 154, asparagine 158, asparagine 186, asparagine 189, asparagine 199, asparagine 236, asparagine 243, asparagine 264, asparagine 278, asparagine 291, and asparagine 297. 5 disulfides stabilise this stretch: cysteine 118–cysteine 207, cysteine 125–cysteine 198, cysteine 130–cysteine 155, cysteine 220–cysteine 249, and cysteine 230–cysteine 241. The V1 stretch occupies residues 130–154 (CTDESDEWMGNVTGKNVTEDIRMKN). Residues 155-198 (CSFNITTVVRDKTKQVHALFYRLDIVPIDNDNSTNSTNYRLINC) form a V2 region. A V3 region spans residues 298–331 (CTRPYKNTRQSTPIGLGQALYTTRGRTKIIGQAH). The cysteines at positions 298 and 332 are disulfide-linked. Asparagine 333, asparagine 340, and asparagine 355 each carry an N-linked (GlcNAc...) asparagine; by host glycan. The tract at residues 364–374 (SSGGDAEITTH) is CD4-binding loop. Cystine bridges form between cysteine 378-cysteine 444 and cysteine 385-cysteine 417. Residues 385-417 (CNTSGLFNSTWNINNSEGANSTESDNKLITLQC) form a V4 region. N-linked (GlcNAc...) asparagine; by host glycosylation is found at asparagine 386, asparagine 392, asparagine 398, asparagine 404, asparagine 443, asparagine 447, asparagine 460, asparagine 461, and asparagine 464. V5 stretches follow at residues 459-470 (TNNSSNETFRPG) and 462-470 (SSNETFRPG). Residues 511–531 (AIGLGAMFLGFLGAAGSTMGA) form a fusion peptide region. The tract at residues 573–591 (KQLQARILAVERYLKDQQL) is immunosuppression. Cysteine 597 and cysteine 603 are oxidised to a cystine. N-linked (GlcNAc...) asparagine; by host glycosylation is found at asparagine 610, asparagine 615, asparagine 624, asparagine 636, and asparagine 673. Positions 632–666 (REIDNYTGLIYRLIEESQTQQEKNEQELLELDKWA) form a coiled coil. Residues 661–682 (ELDKWASLWNWFNITQWLWYIK) form an MPER; binding to GalCer region. A helical transmembrane segment spans residues 684 to 704 (FIMIVGGLIGLRIVFAVLSLV). Residues 705 to 855 (NRVRQGYSPL…IRQGLERLLL (151 aa)) lie on the Cytoplasmic side of the membrane. Residues 711–714 (YSPL) carry the YXXL motif; contains endocytosis signal motif. The S-palmitoyl cysteine; by host moiety is linked to residue cysteine 763. A Di-leucine internalization motif motif is present at residues 854 to 855 (LL).

This sequence belongs to the HIV-1 env protein family. As to quaternary structure, the mature envelope protein (Env) consists of a homotrimer of non-covalently associated gp120-gp41 heterodimers. The resulting complex protrudes from the virus surface as a spike. There seems to be as few as 10 spikes on the average virion. Interacts with host CD4, CCR5 and CXCR4. Gp120 also interacts with the C-type lectins CD209/DC-SIGN and CLEC4M/DC-SIGNR (collectively referred to as DC-SIGN(R)). Gp120 and gp41 interact with GalCer. Gp120 interacts with host ITGA4/ITGB7 complex; on CD4+ T-cells, this interaction results in rapid activation of integrin ITGAL/LFA-1, which facilitates efficient cell-to-cell spreading of HIV-1. Gp120 interacts with cell-associated heparan sulfate; this interaction increases virus infectivity on permissive cells and may be involved in infection of CD4- cells. In terms of assembly, the mature envelope protein (Env) consists of a homotrimer of non-covalently associated gp120-gp41 heterodimers. The resulting complex protrudes from the virus surface as a spike. There seems to be as few as 10 spikes on the average virion. In terms of processing, highly glycosylated by host. The high number of glycan on the protein is reffered to as 'glycan shield' because it contributes to hide protein sequence from adaptive immune system. Post-translationally, palmitoylation of the transmembrane protein and of Env polyprotein (prior to its proteolytic cleavage) is essential for their association with host cell membrane lipid rafts. Palmitoylation is therefore required for envelope trafficking to classical lipid rafts, but not for viral replication. Specific enzymatic cleavages in vivo yield mature proteins. Envelope glycoproteins are synthesized as an inactive precursor that is heavily N-glycosylated and processed likely by host cell furin in the Golgi to yield the mature SU and TM proteins. The cleavage site between SU and TM requires the minimal sequence [KR]-X-[KR]-R. About 2 of the 9 disulfide bonds of gp41 are reduced by P4HB/PDI, following binding to CD4 receptor.

The protein localises to the virion membrane. It localises to the host cell membrane. Its subcellular location is the host endosome membrane. In terms of biological role, oligomerizes in the host endoplasmic reticulum into predominantly trimers. In a second time, gp160 transits in the host Golgi, where glycosylation is completed. The precursor is then proteolytically cleaved in the trans-Golgi and thereby activated by cellular furin or furin-like proteases to produce gp120 and gp41. Attaches the virus to the host lymphoid cell by binding to the primary receptor CD4. This interaction induces a structural rearrangement creating a high affinity binding site for a chemokine coreceptor like CXCR4 and/or CCR5. Acts as a ligand for CD209/DC-SIGN and CLEC4M/DC-SIGNR, which are respectively found on dendritic cells (DCs), and on endothelial cells of liver sinusoids and lymph node sinuses. These interactions allow capture of viral particles at mucosal surfaces by these cells and subsequent transmission to permissive cells. HIV subverts the migration properties of dendritic cells to gain access to CD4+ T-cells in lymph nodes. Virus transmission to permissive T-cells occurs either in trans (without DCs infection, through viral capture and transmission), or in cis (following DCs productive infection, through the usual CD4-gp120 interaction), thereby inducing a robust infection. In trans infection, bound virions remain infectious over days and it is proposed that they are not degraded, but protected in non-lysosomal acidic organelles within the DCs close to the cell membrane thus contributing to the viral infectious potential during DCs' migration from the periphery to the lymphoid tissues. On arrival at lymphoid tissues, intact virions recycle back to DCs' cell surface allowing virus transmission to CD4+ T-cells. Functionally, acts as a class I viral fusion protein. Under the current model, the protein has at least 3 conformational states: pre-fusion native state, pre-hairpin intermediate state, and post-fusion hairpin state. During fusion of viral and target intracellular membranes, the coiled coil regions (heptad repeats) assume a trimer-of-hairpins structure, positioning the fusion peptide in close proximity to the C-terminal region of the ectodomain. The formation of this structure appears to drive apposition and subsequent fusion of viral and target cell membranes. Complete fusion occurs in host cell endosomes and is dynamin-dependent, however some lipid transfer might occur at the plasma membrane. The virus undergoes clathrin-dependent internalization long before endosomal fusion, thus minimizing the surface exposure of conserved viral epitopes during fusion and reducing the efficacy of inhibitors targeting these epitopes. Membranes fusion leads to delivery of the nucleocapsid into the cytoplasm. The sequence is that of Envelope glycoprotein gp160 from Homo sapiens (Human).